A 341-amino-acid polypeptide reads, in one-letter code: Beta-hexosaminidase (341 aa).

Residues D61, R69, R134, and 164 to 165 (KH) each bind substrate. Residue H177 is the Proton donor/acceptor of the active site. The Nucleophile role is filled by D249.

It belongs to the glycosyl hydrolase 3 family. NagZ subfamily.

Its subcellular location is the cytoplasm. The catalysed reaction is Hydrolysis of terminal non-reducing N-acetyl-D-hexosamine residues in N-acetyl-beta-D-hexosaminides.. Its pathway is cell wall biogenesis; peptidoglycan recycling. Plays a role in peptidoglycan recycling by cleaving the terminal beta-1,4-linked N-acetylglucosamine (GlcNAc) from peptide-linked peptidoglycan fragments, giving rise to free GlcNAc, anhydro-N-acetylmuramic acid and anhydro-N-acetylmuramic acid-linked peptides. This Shewanella frigidimarina (strain NCIMB 400) protein is Beta-hexosaminidase.